We begin with the raw amino-acid sequence, 545 residues long: CTP synthase (545 aa).

Positions 1–266 are amidoligase domain; it reads MTTNYIFVTG…DDYICKRFGL (266 aa). Residue serine 14 participates in CTP binding. A UTP-binding site is contributed by serine 14. ATP-binding positions include 15-20 and aspartate 72; that span reads SLGKGI. Mg(2+) is bound by residues aspartate 72 and glutamate 140. CTP contacts are provided by residues 147 to 149, 187 to 192, and lysine 223; these read DIE and KTKPTQ. UTP is bound by residues 187–192 and lysine 223; that span reads KTKPTQ. 239-241 serves as a coordination point for ATP; that stretch reads KDV. One can recognise a Glutamine amidotransferase type-1 domain in the interval 291–542; it reads TIGMVGKYIA…VKAAGEYQKR (252 aa). Glycine 352 contributes to the L-glutamine binding site. The active-site Nucleophile; for glutamine hydrolysis is cysteine 379. L-glutamine contacts are provided by residues 380-383, glutamate 403, and arginine 470; that span reads LGMQ. Residues histidine 515 and glutamate 517 contribute to the active site.

It belongs to the CTP synthase family. Homotetramer.

The catalysed reaction is UTP + L-glutamine + ATP + H2O = CTP + L-glutamate + ADP + phosphate + 2 H(+). It carries out the reaction L-glutamine + H2O = L-glutamate + NH4(+). The enzyme catalyses UTP + NH4(+) + ATP = CTP + ADP + phosphate + 2 H(+). It functions in the pathway pyrimidine metabolism; CTP biosynthesis via de novo pathway; CTP from UDP: step 2/2. Allosterically activated by GTP, when glutamine is the substrate; GTP has no effect on the reaction when ammonia is the substrate. The allosteric effector GTP functions by stabilizing the protein conformation that binds the tetrahedral intermediate(s) formed during glutamine hydrolysis. Inhibited by the product CTP, via allosteric rather than competitive inhibition. Its function is as follows. Catalyzes the ATP-dependent amination of UTP to CTP with either L-glutamine or ammonia as the source of nitrogen. Regulates intracellular CTP levels through interactions with the four ribonucleotide triphosphates. The polypeptide is CTP synthase (Sodalis glossinidius (strain morsitans)).